Reading from the N-terminus, the 150-residue chain is C-type natriuretic peptide (150 aa).

Positions 1–31 (MSISSSSSSSSSSSSCLLLISLMLLAASCQG) are cleaved as a signal peptide. A propeptide spanning residues 32–127 (RPDLQHRNHK…RKMFRGRTKK (96 aa)) is cleaved from the precursor. Low complexity predominate over residues 60–73 (GAADGSSGEEAALS). A disordered region spans residues 60–109 (GAADGSSGEEAALSQRAPPSIRALHPRSGRLGLRDDLEAEPPAENKPRRR). Cys-134 and Cys-150 form a disulfide bridge.

This sequence belongs to the natriuretic peptide family. As to expression, expressed in brain, but not in atrium or ventricle.

The protein localises to the secreted. Its function is as follows. Hormone which plays a role in endochondral ossification through regulation of cartilaginous growth plate chondrocytes proliferation and differentiation. May also be vasoactive and natriuretic. The protein is C-type natriuretic peptide (cnp) of Acipenser transmontanus (White sturgeon).